The primary structure comprises 332 residues: Adenine deaminase (332 aa).

Residues His-14, His-16, and His-194 each coordinate Zn(2+). Catalysis depends on Glu-197, which acts as the Proton donor. Asp-275 is a Zn(2+) binding site. Asp-276 is a binding site for substrate.

This sequence belongs to the metallo-dependent hydrolases superfamily. Adenosine and AMP deaminases family. Adenine deaminase type 2 subfamily. Requires Zn(2+) as cofactor.

It carries out the reaction adenine + H2O + H(+) = hypoxanthine + NH4(+). Functionally, catalyzes the hydrolytic deamination of adenine to hypoxanthine. Plays an important role in the purine salvage pathway and in nitrogen catabolism. The protein is Adenine deaminase of Psychrobacter cryohalolentis (strain ATCC BAA-1226 / DSM 17306 / VKM B-2378 / K5).